We begin with the raw amino-acid sequence, 342 residues long: D-erythrose-4-phosphate dehydrogenase (342 aa).

12–13 (RI) contributes to the NAD(+) binding site. Residues 154–156 (SCT), R200, 213–214 (TK), and R236 each bind substrate. C155 serves as the catalytic Nucleophile. N318 is an NAD(+) binding site.

The protein belongs to the glyceraldehyde-3-phosphate dehydrogenase family. Epd subfamily. As to quaternary structure, homotetramer.

It is found in the cytoplasm. It carries out the reaction D-erythrose 4-phosphate + NAD(+) + H2O = 4-phospho-D-erythronate + NADH + 2 H(+). Its pathway is cofactor biosynthesis; pyridoxine 5'-phosphate biosynthesis; pyridoxine 5'-phosphate from D-erythrose 4-phosphate: step 1/5. Its function is as follows. Catalyzes the NAD-dependent conversion of D-erythrose 4-phosphate to 4-phosphoerythronate. The chain is D-erythrose-4-phosphate dehydrogenase from Klebsiella pneumoniae subsp. pneumoniae (strain ATCC 700721 / MGH 78578).